The following is a 276-amino-acid chain: MTNVNAEIGRMVLAGGIETNLHDVGAGNPVVLVHGSGPGVTAWANWRTVMPELSRHRRVIAPDMVGFGFTQRPHGIHYGVESWVAHLAGILDALELDRVDLVGNSFGGALSLAFAIRFPHRVRRLVLMGAVGVSFELTDGLDAVWGYEPSVPNMRKVMDYFAYDRSLVSDELAELRYKASTRPGFQEAFASMFPAPRQRWVDALASSDQDIRDIRHETLILHGRDDRVIPLETSLRLNQLIEPSQLHVFGRCGHWVQIEQNRGFIRLVNDFLAAED.

The AB hydrolase-1 domain occupies 28–259 (NPVVLVHGSG…GRCGHWVQIE (232 aa)). Catalysis depends on residues S105, D226, and H254.

The protein belongs to the DmpD/TodF/XylF esterase family.

It catalyses the reaction (2Z,4E)-2-hydroxy-6-oxohepta-2,4-dienoate + H2O = (2Z)-2-hydroxypenta-2,4-dienoate + acetate + H(+). It functions in the pathway xenobiotic degradation; toluene degradation. Its function is as follows. Catalyzes the hydrolysis of 2-hydroxy-6-oxohepta-2,4-dienoate into 2-hydroxypenta-2,4-dienoate and acetate. In Pseudomonas putida (strain ATCC 700007 / DSM 6899 / JCM 31910 / BCRC 17059 / LMG 24140 / F1), this protein is 2-hydroxy-6-oxo-2,4-heptadienoate hydrolase (todF).